Consider the following 116-residue polypeptide: Large ribosomal subunit protein bL19 (116 aa).

Belongs to the bacterial ribosomal protein bL19 family.

Functionally, this protein is located at the 30S-50S ribosomal subunit interface and may play a role in the structure and function of the aminoacyl-tRNA binding site. The protein is Large ribosomal subunit protein bL19 of Pseudomonas putida (strain W619).